We begin with the raw amino-acid sequence, 285 residues long: Urease accessory protein UreD (285 aa).

This sequence belongs to the UreD family. In terms of assembly, ureD, UreF and UreG form a complex that acts as a GTP-hydrolysis-dependent molecular chaperone, activating the urease apoprotein by helping to assemble the nickel containing metallocenter of UreC. The UreE protein probably delivers the nickel.

The protein resides in the cytoplasm. Its function is as follows. Required for maturation of urease via the functional incorporation of the urease nickel metallocenter. The sequence is that of Urease accessory protein UreD from Methylobacillus flagellatus (strain ATCC 51484 / DSM 6875 / VKM B-1610 / KT).